The following is a 557-amino-acid chain: Leucine-rich glioma-inactivated protein 1 (557 aa).

The N-terminal stretch at 1–34 (MESERSKRMGNACIPLKRIAYFLCLLSALLLTEG) is a signal peptide. An LRRNT domain is found at 35–72 (KKPAKPKCPAVCTCTKDNALCENARSIPRTVPPDVISL). LRR repeat units lie at residues 92-113 (SLQLLLFTSNSFDVISDDAFIG), 116-137 (HLEYLFIENNNIKSISRHTFRG), and 140-161 (SLIHLSLANNNLQTLPKDIFKG). An LRRCT domain is found at 173–223 (NSFNCDCKLKWLVEWLGHTNATVEDIYCEGPPEYKKRKINSLSSKDFDCII). Asparagine 192 is a glycosylation site (N-linked (GlcNAc...) asparagine). EAR repeat units lie at residues 225-267 (EFAK…EWDH), 271-313 (TFRN…KRDS), 317-364 (KFIK…KWNG), 366-415 (GFYS…QWNK), 419-462 (LFTN…KWGG), 464-506 (SFQD…NWDA), and 510-552 (KFVK…KHVI). An N-linked (GlcNAc...) asparagine glycan is attached at asparagine 277. An N-linked (GlcNAc...) asparagine glycan is attached at asparagine 422.

As to quaternary structure, oligomer. Interacts with KCNA1 within a complex containing KCNA1, KCNA4 and KCNAB1. Part of a complex containing ADAM22, DLG4/PSD95 and CACNG2/Stargazin. Can bind to ADAM11 and ADAM23. Post-translationally, glycosylated. Predominantly expressed in neural tissues, especially in brain. Expression is reduced in low-grade brain tumors and significantly reduced or absent in malignant gliomas. As to expression, expressed in the occipital cortex and hippocampus; higher amounts are observed in the parietal and frontal cortices, putamen, and, particularly, in the temporal neocortex, where it is between 3 and 5 times more abundant than in the hippocampus (at protein level). Expression is absent in the cerebellum. In terms of tissue distribution, abundantly expressed in the occipital cortex and weakly expressed in the hippocampus (at protein level).

The protein localises to the secreted. It localises to the synapse. The protein resides in the cytoplasm. It is found in the golgi apparatus. Its subcellular location is the endoplasmic reticulum. Functionally, regulates voltage-gated potassium channels assembled from KCNA1, KCNA4 and KCNAB1. It slows down channel inactivation by precluding channel closure mediated by the KCNAB1 subunit. Ligand for ADAM22 that positively regulates synaptic transmission mediated by AMPA-type glutamate receptors. Plays a role in suppressing the production of MMP1/3 through the phosphatidylinositol 3-kinase/ERK pathway. May play a role in the control of neuroblastoma cell survival. The sequence is that of Leucine-rich glioma-inactivated protein 1 (LGI1) from Homo sapiens (Human).